The sequence spans 469 residues: Neuraminidase (469 aa).

The Intravirion segment spans residues 1 to 9 (MNPNQKIMT). The helical transmembrane segment at 10 to 30 (IGSVSLIIAAVCFLMQIAILV) threads the bilayer. Positions 11 to 33 (GSVSLIIAAVCFLMQIAILVTTV) are involved in apical transport and lipid raft association. The Virion surface segment spans residues 31–469 (TTVTLHFKQC…DGANINFMPI (439 aa)). Positions 36–88 (HFKQCECDSPSNNQVKPCEPIIIERNITEIVYLNNTTIEKETCPKLVEYRNWS) are hypervariable stalk region. N-linked (GlcNAc...) asparagine; by host glycosylation is found at Asn61, Asn69, Asn70, and Asn86. Positions 91–469 (QCKITGFAPF…DGANINFMPI (379 aa)) are head of neuraminidase. Disulfide bonds link Cys92-Cys417, Cys124-Cys129, Cys183-Cys230, Cys232-Cys237, Cys278-Cys291, Cys280-Cys289, Cys318-Cys337, and Cys421-Cys447. Arg118 is a substrate binding site. A glycan (N-linked (GlcNAc...) asparagine; by host) is linked at Asn146. Residue Asp151 is the Proton donor/acceptor of the active site. A substrate-binding site is contributed by Arg152. 2 N-linked (GlcNAc...) asparagine; by host glycosylation sites follow: Asn200 and Asn234. 276–277 (EE) contributes to the substrate binding site. Arg292 contacts substrate. Positions 293, 297, and 324 each coordinate Ca(2+). Residues 323–344 (GDTPRNDDRSSKSNCRNPNNEK) are disordered. Over residues 334-343 (KSNCRNPNNE) the composition is skewed to polar residues. Arg371 is a substrate binding site. Asn402 carries an N-linked (GlcNAc...) asparagine; by host glycan. Tyr406 (nucleophile) is an active-site residue.

This sequence belongs to the glycosyl hydrolase 34 family. As to quaternary structure, homotetramer. Ca(2+) serves as cofactor. Post-translationally, N-glycosylated.

The protein resides in the virion membrane. It is found in the host apical cell membrane. The enzyme catalyses Hydrolysis of alpha-(2-&gt;3)-, alpha-(2-&gt;6)-, alpha-(2-&gt;8)- glycosidic linkages of terminal sialic acid residues in oligosaccharides, glycoproteins, glycolipids, colominic acid and synthetic substrates.. Inhibited by the neuraminidase inhibitors zanamivir (Relenza) and oseltamivir (Tamiflu). These drugs interfere with the release of progeny virus from infected cells and are effective against all influenza strains. Resistance to neuraminidase inhibitors is quite rare. Its function is as follows. Catalyzes the removal of terminal sialic acid residues from viral and cellular glycoconjugates. Cleaves off the terminal sialic acids on the glycosylated HA during virus budding to facilitate virus release. Additionally helps virus spread through the circulation by further removing sialic acids from the cell surface. These cleavages prevent self-aggregation and ensure the efficient spread of the progeny virus from cell to cell. Otherwise, infection would be limited to one round of replication. Described as a receptor-destroying enzyme because it cleaves a terminal sialic acid from the cellular receptors. May facilitate viral invasion of the upper airways by cleaving the sialic acid moieties on the mucin of the airway epithelial cells. Likely to plays a role in the budding process through its association with lipid rafts during intracellular transport. May additionally display a raft-association independent effect on budding. Plays a role in the determination of host range restriction on replication and virulence. Sialidase activity in late endosome/lysosome traffic seems to enhance virus replication. The polypeptide is Neuraminidase (Influenza A virus (strain A/Swine/Hong Kong/3/1976 H3N2)).